The following is a 170-amino-acid chain: Large ribosomal subunit protein uL6m (170 aa).

It belongs to the universal ribosomal protein uL6 family.

The protein resides in the mitochondrion. This chain is Large ribosomal subunit protein uL6m (mrpl6), found in Dictyostelium discoideum (Social amoeba).